Here is a 356-residue protein sequence, read N- to C-terminus: MTQQRTLLVMAGGTGGHVFPGLAVAHALREQGWKVVWLGNRTGMEATLVPKHDIPMEFIQFGGLRGKGLVTKFLLPLNLLRAFWQSLGALRRVRPSVVLGMGGYITFPAGMMASLLGRPLVLHEQNSIAGLANKVLAKVADRVLCAFPDTLPDSEWTGNPVREELAHMAEPEARYDIRTGPLNVLVVGGSLGAAALNDVVPKAIAMLPEAQRPVVTHQAGAKQIDKLRANYAAAQVSAQTLPFIDDMAKAYADADLVICRAGAMTVSEVAAAGVAALFVPFPHAVDDHQTTNAEFLSKQGAALLVQQQELTADGLAKTIAGLNRPQLKEMARLARGLAKPEATRRVAEVCSQMARD.

Residues 14 to 16 (TGG), asparagine 126, arginine 162, serine 190, isoleucine 244, and glutamine 289 each bind UDP-N-acetyl-alpha-D-glucosamine.

It belongs to the glycosyltransferase 28 family. MurG subfamily.

It is found in the cell inner membrane. It carries out the reaction di-trans,octa-cis-undecaprenyl diphospho-N-acetyl-alpha-D-muramoyl-L-alanyl-D-glutamyl-meso-2,6-diaminopimeloyl-D-alanyl-D-alanine + UDP-N-acetyl-alpha-D-glucosamine = di-trans,octa-cis-undecaprenyl diphospho-[N-acetyl-alpha-D-glucosaminyl-(1-&gt;4)]-N-acetyl-alpha-D-muramoyl-L-alanyl-D-glutamyl-meso-2,6-diaminopimeloyl-D-alanyl-D-alanine + UDP + H(+). Its pathway is cell wall biogenesis; peptidoglycan biosynthesis. Functionally, cell wall formation. Catalyzes the transfer of a GlcNAc subunit on undecaprenyl-pyrophosphoryl-MurNAc-pentapeptide (lipid intermediate I) to form undecaprenyl-pyrophosphoryl-MurNAc-(pentapeptide)GlcNAc (lipid intermediate II). The sequence is that of UDP-N-acetylglucosamine--N-acetylmuramyl-(pentapeptide) pyrophosphoryl-undecaprenol N-acetylglucosamine transferase from Cupriavidus pinatubonensis (strain JMP 134 / LMG 1197) (Cupriavidus necator (strain JMP 134)).